Reading from the N-terminus, the 351-residue chain is 1-aminocyclopropane-1-carboxylate oxidase homolog 4 (351 aa).

Residues 200-304 form the Fe2OG dioxygenase domain; that stretch reads KSQYMVGQHY…AIVFSTFMRA (105 aa). Positions 224, 226, and 280 each coordinate Fe cation. Arg-291 contributes to the 2-oxoglutarate binding site.

Belongs to the iron/ascorbate-dependent oxidoreductase family. Requires Fe(2+) as cofactor.

In Arabidopsis thaliana (Mouse-ear cress), this protein is 1-aminocyclopropane-1-carboxylate oxidase homolog 4.